The chain runs to 217 residues: Ras-related protein Rab-19 (217 aa).

The GTP site is built by S26, V28, G29, K30, T31, C32, Y42, T43, E44, T45, and T49. A Mg(2+)-binding site is contributed by T31. Residues 39-54 (SGVYTETQQNTIGVDF) carry the Switch 1 motif. Mg(2+)-binding residues include T49 and D72. A Switch 2 motif is present at residues 74 to 89 (AGQERFRTITQSYYRS). 7 residues coordinate GTP: G75, N130, K131, D133, S161, A162, and K163. Residues C215 and C217 are each lipidated (S-geranylgeranyl cysteine). C217 is subject to Cysteine methyl ester.

This sequence belongs to the small GTPase superfamily. Rab family. Requires Mg(2+) as cofactor.

Its subcellular location is the cell membrane. The catalysed reaction is GTP + H2O = GDP + phosphate + H(+). With respect to regulation, regulated by guanine nucleotide exchange factors (GEFs) which promote the exchange of bound GDP for free GTP. Regulated by GTPase activating proteins (GAPs) which increase the GTP hydrolysis activity. Inhibited by GDP dissociation inhibitors (GDIs). The small GTPases Rab are key regulators of intracellular membrane trafficking, from the formation of transport vesicles to their fusion with membranes. Rabs cycle between an inactive GDP-bound form and an active GTP-bound form that is able to recruit to membranes different set of downstream effectors directly responsible for vesicle formation, movement, tethering and fusion. The polypeptide is Ras-related protein Rab-19 (Homo sapiens (Human)).